We begin with the raw amino-acid sequence, 456 residues long: Argininosuccinate lyase (456 aa).

The protein belongs to the lyase 1 family. Argininosuccinate lyase subfamily.

The protein resides in the cytoplasm. It carries out the reaction 2-(N(omega)-L-arginino)succinate = fumarate + L-arginine. It participates in amino-acid biosynthesis; L-arginine biosynthesis; L-arginine from L-ornithine and carbamoyl phosphate: step 3/3. This is Argininosuccinate lyase from Carboxydothermus hydrogenoformans (strain ATCC BAA-161 / DSM 6008 / Z-2901).